The primary structure comprises 127 residues: Large ribosomal subunit protein bL12 (127 aa).

Residues 101–127 (VKTGVSKEEAEDAKKQLVESGAEVEIK) form a disordered region. The span at 105–117 (VSKEEAEDAKKQL) shows a compositional bias: basic and acidic residues.

This sequence belongs to the bacterial ribosomal protein bL12 family. Homodimer. Part of the ribosomal stalk of the 50S ribosomal subunit. Forms a multimeric L10(L12)X complex, where L10 forms an elongated spine to which 2 to 4 L12 dimers bind in a sequential fashion. Binds GTP-bound translation factors.

Forms part of the ribosomal stalk which helps the ribosome interact with GTP-bound translation factors. Is thus essential for accurate translation. In Geobacter metallireducens (strain ATCC 53774 / DSM 7210 / GS-15), this protein is Large ribosomal subunit protein bL12.